The primary structure comprises 375 residues: Dehydrodolichyl diphosphate synthase complex subunit NUS1 (375 aa).

A compositionally biased stretch (basic and acidic residues) spans 1–28 (MPTMIKKDDKAMEPPNEKPHRKIERDDV). The disordered stretch occupies residues 1-48 (MPTMIKKDDKAMEPPNEKPHRKIERDDVPESSNHIPPPESGVLKGGKV). A helical transmembrane segment spans residues 97 to 119 (YLFYKFLLVLLYICFGLFRYGQY).

This sequence belongs to the UPP synthase family. As to quaternary structure, forms an active dehydrodolichyl diphosphate synthase complex with either SRT1 or RER2. It depends on Mg(2+) as a cofactor.

It localises to the endoplasmic reticulum membrane. The protein resides in the lipid droplet. It is found in the nucleus membrane. The catalysed reaction is n isopentenyl diphosphate + (2E,6E)-farnesyl diphosphate = a di-trans,poly-cis-polyprenyl diphosphate + n diphosphate. It functions in the pathway protein modification; protein glycosylation. Functionally, with SRT1 or RER2, forms the dehydrodolichyl diphosphate synthase (DDS) complex, an essential component of the dolichol monophosphate (Dol-P) biosynthetic machinery. Adds multiple copies of isopentenyl pyrophosphate (IPP) to farnesyl pyrophosphate (FPP) to produce dehydrodolichyl diphosphate (Dedol-PP), a precursor of dolichol which is utilized as a sugar carrier in protein glycosylation in the endoplasmic reticulum (ER). The polypeptide is Dehydrodolichyl diphosphate synthase complex subunit NUS1 (NUS1) (Saccharomyces cerevisiae (strain ATCC 204508 / S288c) (Baker's yeast)).